The sequence spans 595 residues: Guanylate-binding protein 3 (595 aa).

The interval methionine 1–cysteine 309 is GTPase domain (Globular). Positions threonine 35–lysine 276 constitute a GB1/RHD3-type G domain. GTP contacts are provided by residues glycine 45–serine 52, leucine 67–serine 69, and aspartate 97–leucine 101. Residues glutamate 482–isoleucine 595 adopt a coiled-coil conformation.

It belongs to the TRAFAC class dynamin-like GTPase superfamily. GB1/RHD3 GTPase family. GB1 subfamily. In terms of assembly, heterodimer with other family members, including GBP1, GBP2 and GBP5. Dimerization regulates subcellular location.

It is found in the cytoplasm. The protein resides in the perinuclear region. It localises to the golgi apparatus membrane. The enzyme catalyses GTP + H2O = GDP + phosphate + H(+). In terms of biological role, interferon (IFN)-inducible GTPase that plays important roles in innate immunity against a diverse range of bacterial, viral and protozoan pathogens. Hydrolyzes GTP very efficiently; GDP rather than GMP is the major reaction product. Following infection, recruited to the pathogen-containing vacuoles or vacuole-escaped bacteria and acts as a positive regulator of inflammasome assembly by promoting the release of inflammasome ligands from bacteria. Acts by promoting lysis of pathogen-containing vacuoles, releasing pathogens into the cytosol. Following pathogen release in the cytosol, promotes recruitment of proteins that mediate bacterial cytolysis: this liberates ligands that are detected by inflammasomes, such as lipopolysaccharide (LPS) that activates the non-canonical CASP4/CASP11 inflammasome or double-stranded DNA (dsDNA) that activates the AIM2 inflammasome. Exhibits antiviral activity against influenza virus. Shows the most prominent antiviral activity in epithelial cells. This is Guanylate-binding protein 3 (GBP3) from Homo sapiens (Human).